The sequence spans 353 residues: UDP-N-acetylglucosamine--N-acetylmuramyl-(pentapeptide) pyrophosphoryl-undecaprenol N-acetylglucosamine transferase (353 aa).

Residues 10–12 (TGG), Asn124, Ser183, and Gln283 each bind UDP-N-acetyl-alpha-D-glucosamine.

The protein belongs to the glycosyltransferase 28 family. MurG subfamily.

The protein localises to the cell inner membrane. It carries out the reaction di-trans,octa-cis-undecaprenyl diphospho-N-acetyl-alpha-D-muramoyl-L-alanyl-D-glutamyl-meso-2,6-diaminopimeloyl-D-alanyl-D-alanine + UDP-N-acetyl-alpha-D-glucosamine = di-trans,octa-cis-undecaprenyl diphospho-[N-acetyl-alpha-D-glucosaminyl-(1-&gt;4)]-N-acetyl-alpha-D-muramoyl-L-alanyl-D-glutamyl-meso-2,6-diaminopimeloyl-D-alanyl-D-alanine + UDP + H(+). It participates in cell wall biogenesis; peptidoglycan biosynthesis. Functionally, cell wall formation. Catalyzes the transfer of a GlcNAc subunit on undecaprenyl-pyrophosphoryl-MurNAc-pentapeptide (lipid intermediate I) to form undecaprenyl-pyrophosphoryl-MurNAc-(pentapeptide)GlcNAc (lipid intermediate II). The chain is UDP-N-acetylglucosamine--N-acetylmuramyl-(pentapeptide) pyrophosphoryl-undecaprenol N-acetylglucosamine transferase from Helicobacter pylori (strain J99 / ATCC 700824) (Campylobacter pylori J99).